The primary structure comprises 393 residues: NAD(P)H-quinone oxidoreductase subunit H, chloroplastic (393 aa).

It belongs to the complex I 49 kDa subunit family. NDH is composed of at least 16 different subunits, 5 of which are encoded in the nucleus.

The protein resides in the plastid. It is found in the chloroplast thylakoid membrane. The catalysed reaction is a plastoquinone + NADH + (n+1) H(+)(in) = a plastoquinol + NAD(+) + n H(+)(out). It carries out the reaction a plastoquinone + NADPH + (n+1) H(+)(in) = a plastoquinol + NADP(+) + n H(+)(out). In terms of biological role, NDH shuttles electrons from NAD(P)H:plastoquinone, via FMN and iron-sulfur (Fe-S) centers, to quinones in the photosynthetic chain and possibly in a chloroplast respiratory chain. The immediate electron acceptor for the enzyme in this species is believed to be plastoquinone. Couples the redox reaction to proton translocation, and thus conserves the redox energy in a proton gradient. The protein is NAD(P)H-quinone oxidoreductase subunit H, chloroplastic of Huperzia lucidula (Shining clubmoss).